A 215-amino-acid chain; its full sequence is Large ribosomal subunit protein uL3 (215 aa).

At Gln-156 the chain carries N5-methylglutamine.

Belongs to the universal ribosomal protein uL3 family. In terms of assembly, part of the 50S ribosomal subunit. Forms a cluster with proteins L14 and L19. Post-translationally, methylated by PrmB.

In terms of biological role, one of the primary rRNA binding proteins, it binds directly near the 3'-end of the 23S rRNA, where it nucleates assembly of the 50S subunit. This chain is Large ribosomal subunit protein uL3, found in Xylella fastidiosa (strain M23).